Here is a 783-residue protein sequence, read N- to C-terminus: FYN-binding protein 1 (783 aa).

2 stretches are compositionally biased toward polar residues: residues 1 to 18 and 25 to 45; these read MAKY…SVNS and GPNS…QGNA. Residues 1-502 are disordered; it reads MAKYNTGGNP…KEKKEQEIKK (502 aa). Lysine 3 carries the N6-acetyllysine modification. Serine 28 and serine 46 each carry phosphoserine. Positions 69 to 79 are enriched in basic and acidic residues; the sequence is SSEEKPDKEPK. At serine 225 the chain carries Phosphoserine. 2 stretches are compositionally biased toward basic and acidic residues: residues 240-252 and 278-290; these read PARE…DHAG and NGEE…KIDA. Position 329 is a phosphoserine (serine 329). Pro residues predominate over residues 345 to 363; sequence KPLPPLFTLGPPPPKPNRP. An interaction with SKAP1 region spans residues 348–448; sequence PPLFTLGPPP…QDGVTHSDGA (101 aa). Residues 374 to 387 show a composition bias toward polar residues; it reads TSSGNSTSKGQTSY. The segment covering 392-424 has biased composition (pro residues); it reads LPPPPPSHPASQPPLPASHPSQPPVPSLPPRNI. Residues 451 to 465 are compositionally biased toward acidic residues; the sequence is LDEEQDSEGETYEDI. Residues 456–507 are a coiled coil; that stretch reads DSEGETYEDIEASKEREKKREKEEKKRLELEKKEQKEKEKKEQEIKKKFKLT. Residue serine 457 is modified to Phosphoserine. The short motif at 462–465 is the SH2-binding element; the sequence is YEDI. The segment covering 466 to 501 has biased composition (basic and acidic residues); that stretch reads EASKEREKKREKEEKKRLELEKKEQKEKEKKEQEIK. Positions 469-505 match the Nuclear localization signal motif; that stretch reads KEREKKREKEEKKRLELEKKEQKEKEKKEQEIKKKFK. The SH3 1 domain maps to 511–572; sequence QVIHLAKACC…KTTAVEIDYD (62 aa). A Phosphotyrosine modification is found at tyrosine 571. Serine 573 and serine 580 each carry phosphoserine. The SH2-binding; to LCP2 signature appears at 595–598; it reads YDDV. Residues 598 to 678 are disordered; it reads VAEQDDISSH…GTNVGKAKTE (81 aa). Acidic residues-rich tracts occupy residues 620-635 and 646-656; these read PDDD…DADD and MGDEVYDDVDT. The short motif at 625 to 628 is the SH2-binding; to FYN element; it reads YDGI. Tyrosine 651 bears the Phosphotyrosine mark. The short motif at 674 to 700 is the Nuclear localization signal element; it reads KAKTEEKDLKKLKKQEKEEKDFRKKFK. The SH3 2 domain maps to 700–768; that stretch reads KYDGEIRVLY…LRSYLADNDG (69 aa).

As to quaternary structure, part of a complex consisting of SKAP2, FYB1 and PTPNS1. Part of a complex consisting of SKAP2, FYB1 and LILRB3. Part of a complex consisting of SKAP1, FYB1 and CLNK. Interacts with CLNK (via its SH2 domain); this interaction allows SKAP1 and FYB1 to recruit FYN to the complex, thus promoting the phosphorylation of CLNK by FYN. Interacts with FYN. Interacts with LCP2. Interacts with SKAP1. Interacts with SKAP2. Interacts with FASLG. Interacts with EVL. Interacts with TMEM47. Interacts with LCK. Post-translationally, T-cell receptor ligation leads to increased tyrosine phosphorylation. As to expression, expressed in hematopoietic tissues such as myeloid and T-cells, spleen and thymus. Not expressed in B-cells, nor in non-lymphoid tissues.

It is found in the cytoplasm. It localises to the nucleus. The protein resides in the cell junction. Its function is as follows. Acts as an adapter protein of the FYN and LCP2 signaling cascades in T-cells. May play a role in linking T-cell signaling to remodeling of the actin cytoskeleton. Modulates the expression of IL2. Involved in platelet activation. Prevents the degradation of SKAP1 and SKAP2. May be involved in high affinity immunoglobulin epsilon receptor signaling in mast cells. The polypeptide is FYN-binding protein 1 (Homo sapiens (Human)).